The primary structure comprises 92 residues: uncharacterized protein (92 aa).

This is an uncharacterized protein from Bacillus subtilis (strain 168).